Reading from the N-terminus, the 190-residue chain is Threonylcarbamoyl-AMP synthase (190 aa).

The YrdC-like domain occupies 7 to 190 (NFVLADIVRA…ALTGKRFRQG (184 aa)).

It belongs to the SUA5 family. TsaC subfamily.

The protein localises to the cytoplasm. It catalyses the reaction L-threonine + hydrogencarbonate + ATP = L-threonylcarbamoyladenylate + diphosphate + H2O. Functionally, required for the formation of a threonylcarbamoyl group on adenosine at position 37 (t(6)A37) in tRNAs that read codons beginning with adenine. Catalyzes the conversion of L-threonine, HCO(3)(-)/CO(2) and ATP to give threonylcarbamoyl-AMP (TC-AMP) as the acyladenylate intermediate, with the release of diphosphate. The chain is Threonylcarbamoyl-AMP synthase from Yersinia pestis bv. Antiqua (strain Angola).